A 351-amino-acid chain; its full sequence is Dihydroorotate dehydrogenase (quinone) (351 aa).

Residues 61 to 65 (AGLDK) and Thr-85 contribute to the FMN site. Lys-65 is a binding site for substrate. Substrate is bound at residue 110–114 (NRMGF). Residues Asn-139 and Asn-172 each contribute to the FMN site. Asn-172 contacts substrate. Ser-175 functions as the Nucleophile in the catalytic mechanism. Asn-177 serves as a coordination point for substrate. FMN contacts are provided by Lys-217 and Thr-245. 246–247 (NT) provides a ligand contact to substrate. FMN-binding positions include Gly-268, Gly-297, and 318-319 (YT).

The protein belongs to the dihydroorotate dehydrogenase family. Type 2 subfamily. Monomer. FMN is required as a cofactor.

The protein resides in the cell membrane. The catalysed reaction is (S)-dihydroorotate + a quinone = orotate + a quinol. It participates in pyrimidine metabolism; UMP biosynthesis via de novo pathway; orotate from (S)-dihydroorotate (quinone route): step 1/1. Catalyzes the conversion of dihydroorotate to orotate with quinone as electron acceptor. This is Dihydroorotate dehydrogenase (quinone) from Xylella fastidiosa (strain M23).